The sequence spans 201 residues: 3-isopropylmalate dehydratase small subunit (201 aa).

The protein belongs to the LeuD family. LeuD type 1 subfamily. As to quaternary structure, heterodimer of LeuC and LeuD.

It carries out the reaction (2R,3S)-3-isopropylmalate = (2S)-2-isopropylmalate. The protein operates within amino-acid biosynthesis; L-leucine biosynthesis; L-leucine from 3-methyl-2-oxobutanoate: step 2/4. Catalyzes the isomerization between 2-isopropylmalate and 3-isopropylmalate, via the formation of 2-isopropylmaleate. The sequence is that of 3-isopropylmalate dehydratase small subunit from Nitrobacter hamburgensis (strain DSM 10229 / NCIMB 13809 / X14).